A 135-amino-acid chain; its full sequence is Large ribosomal subunit protein eL32 (135 aa).

The protein belongs to the eukaryotic ribosomal protein eL32 family.

The chain is Large ribosomal subunit protein eL32 (rpl32e) from Methanococcus vannielii.